A 52-amino-acid chain; its full sequence is Conotoxin Cal9.2c (52 aa).

A propeptide spanning residues 1–6 (KKGVTL) is cleaved from the precursor. Disulfide bonds link Cys-14/Cys-31, Cys-19/Cys-41, and Cys-21/Cys-46.

Expressed by the venom duct.

It is found in the secreted. Its function is as follows. Probable neurotoxin with unknown target. Possibly targets ion channels. This Californiconus californicus (California cone) protein is Conotoxin Cal9.2c.